A 197-amino-acid polypeptide reads, in one-letter code: Transcription factor FapR (197 aa).

The protein belongs to the FapR family.

Transcriptional factor involved in regulation of membrane lipid biosynthesis by repressing genes involved in fatty acid and phospholipid metabolism. The polypeptide is Transcription factor FapR (Bacillus cereus (strain 03BB102)).